A 175-amino-acid polypeptide reads, in one-letter code: Large ribosomal subunit protein uL10 (175 aa).

This sequence belongs to the universal ribosomal protein uL10 family. Part of the ribosomal stalk of the 50S ribosomal subunit. The N-terminus interacts with L11 and the large rRNA to form the base of the stalk. The C-terminus forms an elongated spine to which L12 dimers bind in a sequential fashion forming a multimeric L10(L12)X complex.

Forms part of the ribosomal stalk, playing a central role in the interaction of the ribosome with GTP-bound translation factors. The chain is Large ribosomal subunit protein uL10 from Prochlorococcus marinus subsp. pastoris (strain CCMP1986 / NIES-2087 / MED4).